The following is a 393-amino-acid chain: 8-amino-7-oxononanoate synthase (393 aa).

R18 provides a ligand contact to substrate. 105–106 (GY) is a pyridoxal 5'-phosphate binding site. Position 130 (H130) interacts with substrate. Pyridoxal 5'-phosphate is bound by residues S178, H206, and T234. Position 237 is an N6-(pyridoxal phosphate)lysine (K237). T353 is a binding site for substrate.

The protein belongs to the class-II pyridoxal-phosphate-dependent aminotransferase family. BioF subfamily. Homodimer. Pyridoxal 5'-phosphate serves as cofactor.

It catalyses the reaction 6-carboxyhexanoyl-[ACP] + L-alanine + H(+) = (8S)-8-amino-7-oxononanoate + holo-[ACP] + CO2. It participates in cofactor biosynthesis; biotin biosynthesis. In terms of biological role, catalyzes the decarboxylative condensation of pimeloyl-[acyl-carrier protein] and L-alanine to produce 8-amino-7-oxononanoate (AON), [acyl-carrier protein], and carbon dioxide. The polypeptide is 8-amino-7-oxononanoate synthase (Geotalea daltonii (strain DSM 22248 / JCM 15807 / FRC-32) (Geobacter daltonii)).